The sequence spans 447 residues: Probable glycine dehydrogenase (decarboxylating) subunit 1 (447 aa).

Belongs to the GcvP family. N-terminal subunit subfamily. As to quaternary structure, the glycine cleavage system is composed of four proteins: P, T, L and H. In this organism, the P 'protein' is a heterodimer of two subunits.

The catalysed reaction is N(6)-[(R)-lipoyl]-L-lysyl-[glycine-cleavage complex H protein] + glycine + H(+) = N(6)-[(R)-S(8)-aminomethyldihydrolipoyl]-L-lysyl-[glycine-cleavage complex H protein] + CO2. The glycine cleavage system catalyzes the degradation of glycine. The P protein binds the alpha-amino group of glycine through its pyridoxal phosphate cofactor; CO(2) is released and the remaining methylamine moiety is then transferred to the lipoamide cofactor of the H protein. The chain is Probable glycine dehydrogenase (decarboxylating) subunit 1 from Bacillus anthracis (strain A0248).